A 479-amino-acid chain; its full sequence is ATP synthase subunit beta (479 aa).

Position 168 to 175 (168 to 175) interacts with ATP; that stretch reads GGAGVGKT.

It belongs to the ATPase alpha/beta chains family. F-type ATPases have 2 components, CF(1) - the catalytic core - and CF(0) - the membrane proton channel. CF(1) has five subunits: alpha(3), beta(3), gamma(1), delta(1), epsilon(1). CF(0) has three main subunits: a(1), b(2) and c(9-12). The alpha and beta chains form an alternating ring which encloses part of the gamma chain. CF(1) is attached to CF(0) by a central stalk formed by the gamma and epsilon chains, while a peripheral stalk is formed by the delta and b chains.

It localises to the cell membrane. It carries out the reaction ATP + H2O + 4 H(+)(in) = ADP + phosphate + 5 H(+)(out). Its function is as follows. Produces ATP from ADP in the presence of a proton gradient across the membrane. The catalytic sites are hosted primarily by the beta subunits. The sequence is that of ATP synthase subunit beta from Frankia alni (strain DSM 45986 / CECT 9034 / ACN14a).